The following is a 196-amino-acid chain: Glycerol-3-phosphate acyltransferase (196 aa).

Helical transmembrane passes span 4-24, 53-73, 78-98, 114-134, and 140-160; these read FYIMLLAAYLIGAIPTGVVLT, LGVLTLIGDALKGAVPVLIAI, LGDAQVGAVAAAAFIGHCYPV, IFLVLSPLAVLGAFAVFALLV, and VSLGSICAAAAIPILVYFTEG.

The protein belongs to the PlsY family. Probably interacts with PlsX.

It is found in the cell inner membrane. The enzyme catalyses an acyl phosphate + sn-glycerol 3-phosphate = a 1-acyl-sn-glycero-3-phosphate + phosphate. The protein operates within lipid metabolism; phospholipid metabolism. Catalyzes the transfer of an acyl group from acyl-phosphate (acyl-PO(4)) to glycerol-3-phosphate (G3P) to form lysophosphatidic acid (LPA). This enzyme utilizes acyl-phosphate as fatty acyl donor, but not acyl-CoA or acyl-ACP. This chain is Glycerol-3-phosphate acyltransferase, found in Syntrophotalea carbinolica (strain DSM 2380 / NBRC 103641 / GraBd1) (Pelobacter carbinolicus).